A 35-amino-acid chain; its full sequence is Entry-fusion complex protein OPG076 (35 aa).

Residues 2–22 (LVVIMFFIAFVFCSWLSYSYL) traverse the membrane as a helical segment. Over 23–35 (CPYISTKELNKSR) the chain is Virion surface.

The protein belongs to the orthopoxvirus OPG076 family. As to quaternary structure, component of the entry fusion complex (EFC) composed of OPG053, OPG076, OPG086, OPG094, OPG095, OPG099, OPG107, OPG143, OPG104, OPG147 and OPG155. Except for OPG095 and OPG053, each of the EFC proteins is required for assembly or stability of the complex. In terms of processing, unglycosylated because produced in viral factories instead of the classic ER -Golgi route.

The protein localises to the virion membrane. Its function is as follows. Component of the entry fusion complex (EFC), which consists of 11 proteins. During cell infection, this complex mediates entry of the virion core into the host cytoplasm by a two-step mechanism consisting of lipid mixing of the viral and cellular membranes and subsequent pore formation. This is Entry-fusion complex protein OPG076 (OPG076) from Cynomys gunnisoni (Gunnison's prairie dog).